A 333-amino-acid chain; its full sequence is Anthranilate phosphoribosyltransferase (333 aa).

5-phospho-alpha-D-ribose 1-diphosphate contacts are provided by residues glycine 81, 84 to 85 (GD), threonine 89, 91 to 94 (NIST), 109 to 117 (KHGNRSVSS), and alanine 121. Glycine 81 contacts anthranilate. Serine 93 is a binding site for Mg(2+). Asparagine 112 is a binding site for anthranilate. An anthranilate-binding site is contributed by arginine 167. Mg(2+) contacts are provided by aspartate 225 and glutamate 226.

The protein belongs to the anthranilate phosphoribosyltransferase family. In terms of assembly, homodimer. Mg(2+) is required as a cofactor.

The enzyme catalyses N-(5-phospho-beta-D-ribosyl)anthranilate + diphosphate = 5-phospho-alpha-D-ribose 1-diphosphate + anthranilate. It participates in amino-acid biosynthesis; L-tryptophan biosynthesis; L-tryptophan from chorismate: step 2/5. In terms of biological role, catalyzes the transfer of the phosphoribosyl group of 5-phosphorylribose-1-pyrophosphate (PRPP) to anthranilate to yield N-(5'-phosphoribosyl)-anthranilate (PRA). The sequence is that of Anthranilate phosphoribosyltransferase from Haemophilus influenzae (strain PittGG).